The sequence spans 170 residues: Transcriptional repressor NrdR (170 aa).

Residues 3–34 (CPFCRHPDSRVVDSRTTDDGTSIRRRRQCPDC) fold into a zinc finger. The ATP-cone domain occupies 46–136 (LMVVKRSGVT…VYRAFDSLED (91 aa)). The tract at residues 148 to 170 (RPSAEDRGSGETLEVPAPAIAAD) is disordered.

This sequence belongs to the NrdR family. Zn(2+) is required as a cofactor.

Its function is as follows. Negatively regulates transcription of bacterial ribonucleotide reductase nrd genes and operons by binding to NrdR-boxes. This is Transcriptional repressor NrdR from Streptomyces griseus subsp. griseus (strain JCM 4626 / CBS 651.72 / NBRC 13350 / KCC S-0626 / ISP 5235).